The primary structure comprises 662 residues: Putative cysteine-rich receptor-like protein kinase 16 (662 aa).

An N-terminal signal peptide occupies residues 1–26 (MIFIMKLKNLLPIFCFFLVSFSISSA). Gnk2-homologous domains are found at residues 27–131 (QKCG…NRSF) and 137–244 (MTPF…LYQF). The Extracellular segment spans residues 27–277 (QKCGKTGLFK…DDGGKISTRN (251 aa)). Asn55, Asn64, Asn106, Asn128, Asn145, Asn152, and Asn206 each carry an N-linked (GlcNAc...) asparagine glycan. Residues 278 to 298 (ILGITVALAFFITVLLVLGYA) traverse the membrane as a helical segment. The Cytoplasmic segment spans residues 299–662 (LSRRRKAYQE…DASITSVDLR (364 aa)). The 278-residue stretch at 335-612 (FQKSNKLGHG…VFQMLTNTFL (278 aa)) folds into the Protein kinase domain. ATP-binding positions include 341-349 (LGHGGFGEV) and Lys363. Asp460 acts as the Proton acceptor in catalysis.

This sequence belongs to the protein kinase superfamily. Ser/Thr protein kinase family. CRK subfamily.

Its subcellular location is the membrane. It carries out the reaction L-seryl-[protein] + ATP = O-phospho-L-seryl-[protein] + ADP + H(+). The enzyme catalyses L-threonyl-[protein] + ATP = O-phospho-L-threonyl-[protein] + ADP + H(+). In Arabidopsis thaliana (Mouse-ear cress), this protein is Putative cysteine-rich receptor-like protein kinase 16 (CRK16).